We begin with the raw amino-acid sequence, 496 residues long: Fascin (496 aa).

This sequence belongs to the fascin family.

It localises to the cytoplasm. Its subcellular location is the cytoskeleton. Its function is as follows. Acts as an actin bundling protein. The polypeptide is Fascin (Strongylocentrotus purpuratus (Purple sea urchin)).